We begin with the raw amino-acid sequence, 196 residues long: UMP-CMP kinase (196 aa).

Residue G13 to T18 coordinates ATP. S33 carries the phosphoserine modification. The NMP stretch occupies residues S33–V63. An a ribonucleoside 5'-phosphate-binding site is contributed by R39. N6-acetyllysine is present on residues K43 and K55. Residues K61–V63 and G93–R96 each bind a ribonucleoside 5'-phosphate. Position 100 (N100) interacts with CMP. An N6-succinyllysine modification is found at K106. Positions E133–D143 are LID. Residue R134 participates in ATP binding. A ribonucleoside 5'-phosphate-binding residues include R140 and R151. Position 179 (K179) interacts with ATP. Position 180 is a phosphoserine (S180).

This sequence belongs to the adenylate kinase family. UMP-CMP kinase subfamily. In terms of assembly, monomer. Requires Mg(2+) as cofactor.

It localises to the nucleus. The protein resides in the cytoplasm. The enzyme catalyses CMP + ATP = CDP + ADP. It carries out the reaction dCMP + ATP = dCDP + ADP. It catalyses the reaction UMP + ATP = UDP + ADP. The catalysed reaction is a 2'-deoxyribonucleoside 5'-diphosphate + ATP = a 2'-deoxyribonucleoside 5'-triphosphate + ADP. The enzyme catalyses a ribonucleoside 5'-diphosphate + ATP = a ribonucleoside 5'-triphosphate + ADP. Functionally, catalyzes the phosphorylation of pyrimidine nucleoside monophosphates at the expense of ATP. Plays an important role in de novo pyrimidine nucleotide biosynthesis. Has preference for UMP and CMP as phosphate acceptors. Also displays broad nucleoside diphosphate kinase activity. The sequence is that of UMP-CMP kinase from Bos taurus (Bovine).